Reading from the N-terminus, the 521-residue chain is Acetylcholine receptor subunit beta-like 1 (521 aa).

Residues 1-24 (MESSCKSWLLCSILVLVAFSLVSA) form the signal peptide. Residues 25 to 235 (SEDEERLVRD…ITFYIIIRRK (211 aa)) lie on the Extracellular side of the membrane. An N-linked (GlcNAc...) asparagine glycan is attached at Asn48. The cysteines at positions 152 and 166 are disulfide-linked. 3 helical membrane passes run 236–260 (TLFY…VFYL), 268–286 (VTLG…LLVS), and 302–323 (YLLF…IINW). The Cytoplasmic portion of the chain corresponds to 324–481 (NFRGPRTHRM…WKYVAMVIDR (158 aa)). The helical transmembrane segment at 482 to 500 (LQLYIFFIVTTAGTVGILM) threads the bilayer.

It belongs to the ligand-gated ion channel (TC 1.A.9) family. Acetylcholine receptor (TC 1.A.9.1) subfamily. In terms of tissue distribution, CNS in embryos.

It localises to the postsynaptic cell membrane. It is found in the cell membrane. In terms of biological role, after binding acetylcholine, the AChR responds by an extensive change in conformation that affects all subunits and leads to opening of an ion-conducting channel across the plasma membrane. The chain is Acetylcholine receptor subunit beta-like 1 (nAChRbeta1) from Drosophila melanogaster (Fruit fly).